The primary structure comprises 302 residues: Urease accessory protein UreD 2 (302 aa).

Belongs to the UreD family. UreD, UreF and UreG form a complex that acts as a GTP-hydrolysis-dependent molecular chaperone, activating the urease apoprotein by helping to assemble the nickel containing metallocenter of UreC. The UreE protein probably delivers the nickel.

The protein localises to the cytoplasm. Functionally, required for maturation of urease via the functional incorporation of the urease nickel metallocenter. The chain is Urease accessory protein UreD 2 from Brucella melitensis biotype 1 (strain ATCC 23456 / CCUG 17765 / NCTC 10094 / 16M).